The chain runs to 370 residues: MIQSVRIKNFKNFKNTKIDGFTKLNIITGQNNAGKSNLLEALYYLVGKSMHPCTNVLEIYDNIRKEPLTSESKSLMFYGLDTKEEIQIVTTLDNNQTLDLQIKFIASENQKVIESQIIPTAEQTQMSSQLNFTLKKNNEEIYNDHLNIAKVPNFPPIPNQSGYNRQFKNFDSNQLQKLLPFESAVIIPSDVVYRQAHMIQAVSKICSNNQLEEELNKHLNQFDNNIQAISFNTNNQLKLKVKDIKEKVPLSVFGDGLKKYLHIVSAFMADNAKTIYIDEVENGLHFSRMRLLLKNTIDFINNNKDGNLQVFMTTHSQEFIEILDQVIREKDFAHQTKLFCLKQDDQYVIPRTYYGENLEYYFENEENLFG.

The enzyme catalyses ATP + H2O = ADP + phosphate + H(+). It catalyses the reaction GTP + H2O = GDP + phosphate + H(+). In terms of biological role, has nucleotide phosphatase activity toward ATP and GTP, but not toward CTP, TTP and ADP. The sequence is that of ATP/GTP phosphatase from Helicobacter pylori (strain ATCC 700392 / 26695) (Campylobacter pylori).